A 454-amino-acid chain; its full sequence is tRNA modification GTPase MnmE (454 aa).

Arg23, Glu80, and Lys120 together coordinate (6S)-5-formyl-5,6,7,8-tetrahydrofolate. The 162-residue stretch at 216–377 (GMKVVIAGRP…LRNHLKQSMG (162 aa)) folds into the TrmE-type G domain. Asn226 serves as a coordination point for K(+). Residues 226–231 (NAGKSS), 245–251 (TDIAGTT), 270–273 (DTAG), 335–338 (NKAD), and 358–360 (SAR) contribute to the GTP site. Ser230 contributes to the Mg(2+) binding site. K(+) contacts are provided by Thr245, Ile247, and Thr250. Thr251 is a binding site for Mg(2+). Lys454 serves as a coordination point for (6S)-5-formyl-5,6,7,8-tetrahydrofolate.

It belongs to the TRAFAC class TrmE-Era-EngA-EngB-Septin-like GTPase superfamily. TrmE GTPase family. In terms of assembly, homodimer. Heterotetramer of two MnmE and two MnmG subunits. It depends on K(+) as a cofactor.

It localises to the cytoplasm. Functionally, exhibits a very high intrinsic GTPase hydrolysis rate. Involved in the addition of a carboxymethylaminomethyl (cmnm) group at the wobble position (U34) of certain tRNAs, forming tRNA-cmnm(5)s(2)U34. The sequence is that of tRNA modification GTPase MnmE from Klebsiella pneumoniae subsp. pneumoniae (strain ATCC 700721 / MGH 78578).